The following is a 523-amino-acid chain: REST corepressor 2 (523 aa).

The disordered stretch occupies residues 1 to 43 (MPSVMEKPSAGSGILSRSRAKTAPNGGQPHSEDDSSEEEHSHD). Residues 30–43 (HSEDDSSEEEHSHD) are compositionally biased toward basic and acidic residues. S31, S35, S36, and S63 each carry phosphoserine. The ELM2 domain occupies 44–129 (SMIRVGTNYQ…KSLADLANFT (86 aa)). A Glycyl lysine isopeptide (Lys-Gly) (interchain with G-Cter in SUMO2) cross-link involves residue K88. The 52-residue stretch at 130–181 (PFPDEWTVEDKVLFEQAFGFHGKCFQRIQQMLPDKVIPSLVKYYYSWKKTRS) folds into the SANT 1 domain. The interval 185–244 (VMDRQARRLGGRKDKEDSDELEEGRGAVSEGEPDTGDPKREPLPSRPLNARPGPGKKEVQ) is disordered. Residue S202 is modified to Phosphoserine. Residues 283–314 (TLRGLDSQLISLKRQVQSMKQTNSSLRQALEG) adopt a coiled-coil conformation. The 52-residue stretch at 327–378 (KFNSRWTTDEQLLAVQAIRRYGKDFGAIAEVIGNKTLTQVKTFFVSYRRRFN) folds into the SANT 2 domain. The segment at 387 to 523 (EAEQDGAPAA…APLEPPAPSL (137 aa)) is disordered. Positions 432-459 (SVPPAPPPPPPPTSLSQPPPLLRPPLPT) are enriched in pro residues. A compositionally biased stretch (low complexity) spans 460 to 482 (APTLLRQPPPLQQGRFLQPRLAP). Position 479 is an asymmetric dimethylarginine (R479). The span at 504 to 523 (GPQPPPTLVGAPLEPPAPSL) shows a compositional bias: pro residues.

Belongs to the CoREST family. In terms of tissue distribution, predominantly, but not exclusively, expressed in neural tissue. Strongly expressed in neural domains of the developing brain of the developing mouse CNS.

The protein localises to the nucleus. May act as a component of a corepressor complex that represses transcription. This is REST corepressor 2 (Rcor2) from Mus musculus (Mouse).